The chain runs to 156 residues: Ribosome maturation factor RimP (156 aa).

This sequence belongs to the RimP family.

It localises to the cytoplasm. Functionally, required for maturation of 30S ribosomal subunits. In Dictyoglomus turgidum (strain DSM 6724 / Z-1310), this protein is Ribosome maturation factor RimP.